Reading from the N-terminus, the 166-residue chain is MASGVAVSDGVIKVFNDMKVRKSSTPEEVKKRKKAVLFCLSEDKKNIILEEGKEILVGDVGQTVDDPYATFVKMLPDKDCRYALYDATYETKESKKEDLVFIFWAPECAPLKSKMIYASSKDAIKKKLTGIKHELQANCYEEVKDRCTLAEKLGGSAVISLEGKPL.

An N-acetylalanine modification is found at Ala2. Phosphoserine occurs at positions 3 and 8. Residues 4–153 (GVAVSDGVIK…KDRCTLAEKL (150 aa)) form the ADF-H domain. The residue at position 13 (Lys13) is an N6-acetyllysine. Thr25 is modified (phosphothreonine). A Nuclear localization signal motif is present at residues 30 to 34 (KKRKK). Ser41 is modified (phosphoserine). The residue at position 68 (Tyr68) is a Phosphotyrosine. Lys73 carries the post-translational modification N6-acetyllysine. Lys132 participates in a covalent cross-link: Glycyl lysine isopeptide (Lys-Gly) (interchain with G-Cter in SUMO2). Residue Tyr140 is modified to Phosphotyrosine. Lys144 carries the N6-acetyllysine modification. Ser156 bears the Phosphoserine mark.

This sequence belongs to the actin-binding proteins ADF family. In terms of assembly, can bind G- and F-actin in a 1:1 ratio of cofilin to actin. It is a major component of intranuclear and cytoplasmic actin rods. Interacts with the subcortical maternal complex (SCMC) via interaction with TLE6 and NLRP5. Interacts with C9orf72. In terms of processing, inactivated by phosphorylation on Ser-3. Phosphorylated on Ser-3 in resting cells. Dephosphorylated by PDXP/chronophin; this restores its activity in promoting actin filament depolymerization. The phosphorylation of Ser-24 may prevent recognition of the nuclear localization signal. Phosphorylated via a ARRB1-RAC1-LIMK1-PAK1 cascade upon active ligand stimulation of atypical chemokine receptor ACKR2.

The protein localises to the nucleus matrix. Its subcellular location is the cytoplasm. The protein resides in the cytoskeleton. It localises to the cell projection. It is found in the ruffle membrane. The protein localises to the lamellipodium membrane. Its subcellular location is the lamellipodium. The protein resides in the growth cone. It localises to the axon. Its function is as follows. Binds to F-actin and exhibits pH-sensitive F-actin depolymerizing activity. Important for normal progress through mitosis and normal cytokinesis. In conjunction with the subcortical maternal complex (SCMC), plays an essential role for zygotes to progress beyond the first embryonic cell divisions via regulation of actin dynamics. Required for the centralization of the mitotic spindle and symmetric division of zygotes. Plays a role in the regulation of cell morphology and cytoskeletal organization in epithelial cells. Required for the up-regulation of atypical chemokine receptor ACKR2 from endosomal compartment to cell membrane, increasing its efficiency in chemokine uptake and degradation. Required for neural tube morphogenesis and neural crest cell migration. This Bos taurus (Bovine) protein is Cofilin-1 (CFL1).